The following is a 378-amino-acid chain: GTPase Obg (378 aa).

The Obg domain occupies 1–159 (MKFVDEATIE…RRLRLELKVL (159 aa)). One can recognise an OBG-type G domain in the interval 160-336 (ADVGLLGLPN…LIWALQDYLD (177 aa)). Residues 166–173 (GLPNAGKS), 191–195 (FTTLH), 213–216 (DIPG), 288–291 (NKLD), and 317–319 (SGL) each bind GTP. 2 residues coordinate Mg(2+): S173 and T193. A disordered region spans residues 345–378 (AQDQADGTYVAEDPRFDATRSDAAPPGAPRGGDE).

The protein belongs to the TRAFAC class OBG-HflX-like GTPase superfamily. OBG GTPase family. As to quaternary structure, monomer. It depends on Mg(2+) as a cofactor.

It localises to the cytoplasm. An essential GTPase which binds GTP, GDP and possibly (p)ppGpp with moderate affinity, with high nucleotide exchange rates and a fairly low GTP hydrolysis rate. Plays a role in control of the cell cycle, stress response, ribosome biogenesis and in those bacteria that undergo differentiation, in morphogenesis control. The polypeptide is GTPase Obg (Bordetella petrii (strain ATCC BAA-461 / DSM 12804 / CCUG 43448)).